A 415-amino-acid chain; its full sequence is MSRSKRLQTGQLRARFAAGLSAMYAAEVPAYGTLVEVCAQVNSDYLTRHRRAERLGSLQRVTAERHGAIRVGNPAELAAVADLFAAFGMLPVGYYDLRTAESPIPVVSTAFRPIDANELAHNPFRVFTSMLAIEDRRYFDADLRTRVQTFLARRQLFDPALLAQARAIAADGGCDADDAPAFVAAAVAAFALSREPVEKSWYDELSRVSAVAADIAGVGSTHINHLTPRVLDIDDLYRRMTERGITMIDTIQGPPRTDGPDVLLRQTSFRALAEPRMFRDEDGTVTPGILRVRFGEVEARGVALTPRGRERYEAAMAAADPAAVWATHFPSTDAEMAAQGLAYYRGGDPSAPIVYEDFLPASAAGIFRSNLDRDSQTGDGPDDAGYNVDWLAGAIGRHIHDPYALYDALAQEERR.

3 residues coordinate 2-oxoadipate: histidine 66, arginine 70, and histidine 225. A Fe(2+)-binding site is contributed by histidine 66. Histidine 225 and glutamate 296 together coordinate Fe(2+). Alanine 361 is a binding site for 2-oxoadipate.

Belongs to the 2-oxoadipate dioxygenase/decarboxylase family. Fe(2+) is required as a cofactor.

It carries out the reaction 2-oxoadipate + O2 = (R)-2-hydroxyglutarate + CO2. Its function is as follows. Catalyzes the decarboxylation and hydroxylation of 2-oxoadipate (2OA) to form D-2-hydroxyglutarate (D-2-HGA). The protein is 2-oxoadipate dioxygenase/decarboxylase of Mycobacterium bovis (strain ATCC BAA-935 / AF2122/97).